Here is a 432-residue protein sequence, read N- to C-terminus: Adenylosuccinate synthetase (432 aa).

GTP contacts are provided by residues 13–19 (GDEGKGK) and 41–43 (GHT). Asp14 functions as the Proton acceptor in the catalytic mechanism. Mg(2+)-binding residues include Asp14 and Gly41. Residues 14–17 (DEGK), 39–42 (NAGH), Thr130, Arg144, Gln225, Thr240, and Arg304 contribute to the IMP site. His42 functions as the Proton donor in the catalytic mechanism. Position 300 to 306 (300 to 306 (ATTGRRR)) interacts with substrate. Residues Arg306, 332 to 334 (KLD), and 414 to 416 (STG) each bind GTP.

It belongs to the adenylosuccinate synthetase family. In terms of assembly, homodimer. Requires Mg(2+) as cofactor.

It is found in the cytoplasm. It catalyses the reaction IMP + L-aspartate + GTP = N(6)-(1,2-dicarboxyethyl)-AMP + GDP + phosphate + 2 H(+). Its pathway is purine metabolism; AMP biosynthesis via de novo pathway; AMP from IMP: step 1/2. Its function is as follows. Plays an important role in the de novo pathway of purine nucleotide biosynthesis. Catalyzes the first committed step in the biosynthesis of AMP from IMP. The chain is Adenylosuccinate synthetase from Methylococcus capsulatus (strain ATCC 33009 / NCIMB 11132 / Bath).